The primary structure comprises 164 residues: Transcription elongation factor GreA (164 aa).

It belongs to the GreA/GreB family.

In terms of biological role, necessary for efficient RNA polymerase transcription elongation past template-encoded arresting sites. The arresting sites in DNA have the property of trapping a certain fraction of elongating RNA polymerases that pass through, resulting in locked ternary complexes. Cleavage of the nascent transcript by cleavage factors such as GreA or GreB allows the resumption of elongation from the new 3'terminus. GreA releases sequences of 2 to 3 nucleotides. This is Transcription elongation factor GreA from Helicobacter pylori (strain P12).